Here is a 159-residue protein sequence, read N- to C-terminus: Cyclic pyranopterin monophosphate synthase (159 aa).

Substrate-binding positions include 75 to 77 and 113 to 114; these read LCH and ME. The active site involves D128.

This sequence belongs to the MoaC family. In terms of assembly, homohexamer; trimer of dimers.

It carries out the reaction (8S)-3',8-cyclo-7,8-dihydroguanosine 5'-triphosphate = cyclic pyranopterin phosphate + diphosphate. It participates in cofactor biosynthesis; molybdopterin biosynthesis. Its function is as follows. Catalyzes the conversion of (8S)-3',8-cyclo-7,8-dihydroguanosine 5'-triphosphate to cyclic pyranopterin monophosphate (cPMP). The protein is Cyclic pyranopterin monophosphate synthase of Cupriavidus metallidurans (strain ATCC 43123 / DSM 2839 / NBRC 102507 / CH34) (Ralstonia metallidurans).